Reading from the N-terminus, the 411-residue chain is Dual-specificity RNA methyltransferase RlmN (411 aa).

The Proton acceptor role is filled by Glu-125. In terms of domain architecture, Radical SAM core spans 131–380 (EEGRGTLCVS…IRTPRGRDIL (250 aa)). Cys-138 and Cys-383 are oxidised to a cystine. [4Fe-4S] cluster is bound by residues Cys-145, Cys-149, and Cys-152. S-adenosyl-L-methionine contacts are provided by residues 209-210 (GE), Ser-241, 263-265 (SLH), and Asn-340. The active-site S-methylcysteine intermediate is the Cys-383.

This sequence belongs to the radical SAM superfamily. RlmN family. The cofactor is [4Fe-4S] cluster.

Its subcellular location is the cytoplasm. It carries out the reaction adenosine(2503) in 23S rRNA + 2 reduced [2Fe-2S]-[ferredoxin] + 2 S-adenosyl-L-methionine = 2-methyladenosine(2503) in 23S rRNA + 5'-deoxyadenosine + L-methionine + 2 oxidized [2Fe-2S]-[ferredoxin] + S-adenosyl-L-homocysteine. It catalyses the reaction adenosine(37) in tRNA + 2 reduced [2Fe-2S]-[ferredoxin] + 2 S-adenosyl-L-methionine = 2-methyladenosine(37) in tRNA + 5'-deoxyadenosine + L-methionine + 2 oxidized [2Fe-2S]-[ferredoxin] + S-adenosyl-L-homocysteine. Functionally, specifically methylates position 2 of adenine 2503 in 23S rRNA and position 2 of adenine 37 in tRNAs. m2A2503 modification seems to play a crucial role in the proofreading step occurring at the peptidyl transferase center and thus would serve to optimize ribosomal fidelity. This Brucella anthropi (strain ATCC 49188 / DSM 6882 / CCUG 24695 / JCM 21032 / LMG 3331 / NBRC 15819 / NCTC 12168 / Alc 37) (Ochrobactrum anthropi) protein is Dual-specificity RNA methyltransferase RlmN.